Here is a 621-residue protein sequence, read N- to C-terminus: Archaeal Lon protease (621 aa).

Residues 1 to 117 (MNEEVREILG…YKEEAMKKAQ (117 aa)) lie on the Cytoplasmic side of the membrane. Residue 54–61 (GSPGTGKS) participates in ATP binding. Residues 118-136 (ARNFLIFTLVFLVIGYTVL) form a helical membrane-spanning segment. Topologically, residues 137–141 (TNPGN) are extracellular. A helical membrane pass occupies residues 142-160 (LIWGIIAAVLILMMSRYFI). Residues 161 to 621 (PREDRNVPKL…KFKELELAAV (461 aa)) are Cytoplasmic-facing. One can recognise a Lon proteolytic domain in the interval 423-602 (GYEVGRVNGL…NEVLEHVLED (180 aa)). Residues Ser-509 and Lys-552 contribute to the active site.

It belongs to the peptidase S16 family. Archaeal LonB subfamily. In terms of assembly, homohexamer. Organized in a ring with a central cavity.

It is found in the cell membrane. Its function is as follows. ATP-dependent serine protease that mediates the selective degradation of mutant and abnormal proteins as well as certain short-lived regulatory proteins. Degrades polypeptides processively. This is Archaeal Lon protease from Archaeoglobus fulgidus (strain ATCC 49558 / DSM 4304 / JCM 9628 / NBRC 100126 / VC-16).